A 530-amino-acid chain; its full sequence is AarF domain-containing protein kinase 1 (530 aa).

The Protein kinase domain occupies 155 to 467 (SFDDTPLGTA…ASSFLNMSRC (313 aa)). Residues 161–169 (LGTASLAQV) and K183 each bind ATP. Catalysis depends on D315, which acts as the Proton acceptor.

Belongs to the protein kinase superfamily. ADCK protein kinase family.

It is found in the mitochondrion. Appears to be essential for maintaining mitochondrial cristae formation and mitochondrial function by acting via YME1L1 in a kinase-independent manner to regulate essential mitochondrial structural proteins OPA1 and IMMT. The action of this enzyme is not yet clear. It is not known if it has protein kinase activity and what type of substrate it would phosphorylate (Ser, Thr or Tyr). The chain is AarF domain-containing protein kinase 1 from Homo sapiens (Human).